The chain runs to 1515 residues: Apolipophorin (1515 aa).

A VWFD domain is found at 952-1118; sequence LRGVVVNGQH…NSYRLASSCP (167 aa). Cys976 and Cys1117 form a disulfide bridge. Asn988 carries an N-linked (GlcNAc...) asparagine glycan.

In terms of tissue distribution, hemolymph.

The protein localises to the secreted. Its function is as follows. Mediates transport for various types of lipids in hemolymph. Acts by forming lipoprotein particles that bind lipoproteins and lipids. Binds the A.niger cell wall component alpha-1,3-glucan, a fungal pathogen-associated molecular pattern (PAMP) that activates the host immune response. This is Apolipophorin from Galleria mellonella (Greater wax moth).